Consider the following 326-residue polypeptide: Isopenicillin N synthase (326 aa).

The isopenicillin N site is built by Arg-84, Tyr-88, and Tyr-186. 5 residues coordinate N-[(5S)-5-amino-5-carboxypentanoyl]-L-cysteinyl-D-valine: Arg-84, Tyr-88, Tyr-186, His-209, and Asp-211. In terms of domain architecture, Fe2OG dioxygenase spans 183–283 (LIRYPFLENY…RLSIPFFANL (101 aa)). Fe(2+)-binding residues include His-209, Asp-211, and His-265. Arg-274 contacts 2-oxoglutarate. Residue Ser-276 coordinates isopenicillin N. Ser-276 contacts N-[(5S)-5-amino-5-carboxypentanoyl]-L-cysteinyl-D-valine.

It belongs to the iron/ascorbate-dependent oxidoreductase family. Fe cation is required as a cofactor. L-ascorbate serves as cofactor.

It carries out the reaction N-[(5S)-5-amino-5-carboxypentanoyl]-L-cysteinyl-D-valine + O2 = isopenicillin N + 2 H2O. It functions in the pathway antibiotic biosynthesis; penicillin G biosynthesis; penicillin G from L-alpha-aminoadipate and L-cysteine and L-valine: step 2/3. Its function is as follows. Removes, in the presence of oxygen, 4 hydrogen atoms from delta-L-(alpha-aminoadipyl)-L-cysteinyl-D-valine (ACV) to form the azetidinone and thiazolidine rings of isopenicillin. The protein is Isopenicillin N synthase (pcbC) of Flavobacterium sp. (strain SC 12,154).